Here is a 474-residue protein sequence, read N- to C-terminus: Calcium/calmodulin-dependent protein kinase type IV (474 aa).

Ser11 and Ser12 each carry phosphoserine; by autocatalysis. The Protein kinase domain occupies 42–296; that stretch reads FEVESELGRG…TFQALQHPWV (255 aa). ATP is bound by residues 48–56 and Lys71; that span reads LGRGATSIV. Thr53 carries an O-linked (GlcNAc) threonine glycan. Residue Ser54 is glycosylated (O-linked (GlcNAc) serine). A glycan (O-linked (GlcNAc) serine) is linked at Ser133. Asp160 functions as the Proton acceptor in the catalytic mechanism. Residue Ser185 is glycosylated (O-linked (GlcNAc) serine). Phosphothreonine; by CaMKK1 and CaMKK2 is present on Thr196. The segment at 297-336 is autoinhibitory domain; the sequence is TGKAANFVHMDTAQKKLQEFNARRKLKAAVKAVVASSRLG. The PP2A-binding stretch occupies residues 302 to 319; the sequence is NFVHMDTAQKKLQEFNAR. Positions 318 to 337 are calmodulin-binding; the sequence is ARRKLKAAVKAVVASSRLGS. Ser332 is subject to Phosphoserine; by autocatalysis. Residues 336 to 474 form a disordered region; it reads GSASSSHTNI…PQQDAILPEY (139 aa). Position 337 is a phosphoserine (Ser337). O-linked (GlcNAc) serine glycosylation is found at Ser340, Ser341, and Ser352. Polar residues predominate over residues 342–356; sequence HTNIQESNKASSEAQ. Basic and acidic residues predominate over residues 360–392; the sequence is DGKDKTDPLENKMQAGDHEAAKAAADETMKLQS. Acidic residues predominate over residues 393 to 413; it reads EEVEEEEGVKEEEEEEEEEEE. Basic and acidic residues predominate over residues 431 to 454; that stretch reads QEMKRNSEETLKSVEEEMDPKAEE. Ser437 and Ser443 each carry phosphoserine.

This sequence belongs to the protein kinase superfamily. CAMK Ser/Thr protein kinase family. CaMK subfamily. In terms of assembly, monomer. Interacts with protein phosphatase 2A (PPP2CA/PPP2CB); the interaction is mutually exclusive with binding to Ca(2+)/calmodulin. Phosphorylated by CaMKK1 and CaMKK2 on Thr-196. Dephosphorylated by protein phosphatase 2A. Autophosphorylated on Ser-11 and Ser-12. Post-translationally, glycosylation at Ser-185 modulates the phosphorylation of CaMK4 at Thr-196 and negatively regulates its activity toward CREB1 in basal conditions and during early inomycin stimulation. In terms of processing, the N-terminus of calspermin is blocked. Isoform 1 is expressed in brain and isoform 2 is testis specific.

The protein resides in the cytoplasm. It localises to the nucleus. It catalyses the reaction L-seryl-[protein] + ATP = O-phospho-L-seryl-[protein] + ADP + H(+). The enzyme catalyses L-threonyl-[protein] + ATP = O-phospho-L-threonyl-[protein] + ADP + H(+). Its activity is regulated as follows. Activated by Ca(2+)/calmodulin. Binding of calmodulin results in conformational change that relieves intrasteric autoinhibition and allows phosphorylation of Thr-196 within the activation loop by CaMKK1 or CaMKK2. Phosphorylation of Thr-196 results in a 10-20-fold increase in total activity to generate Ca(2+)/calmodulin-independent activity. Autophosphorylation of the N-terminus Ser-11 and Ser-12 is required for full activation. Inactivated by protein phosphatase 2A (PPP2CA/PPP2CB) which dephosphorylates Thr-196, thereby terminating autonomous activity and helping to maintain the enzyme in its autoinhibited state. In terms of biological role, calcium/calmodulin-dependent protein kinase that operates in the calcium-triggered CaMKK-CaMK4 signaling cascade and regulates, mainly by phosphorylation, the activity of several transcription activators, such as CREB1, MEF2D, JUN and RORA, which play pivotal roles in immune response, inflammation, and memory consolidation. In the thymus, regulates the CD4(+)/CD8(+) double positive thymocytes selection threshold during T-cell ontogeny. In CD4 memory T-cells, is required to link T-cell antigen receptor (TCR) signaling to the production of IL2, IFNG and IL4 (through the regulation of CREB and MEF2). Regulates the differentiation and survival phases of osteoclasts and dendritic cells (DCs). Mediates DCs survival by linking TLR4 and the regulation of temporal expression of BCL2. Phosphorylates the transcription activator CREB1 on 'Ser-133' in hippocampal neuron nuclei and contribute to memory consolidation and long term potentiation (LTP) in the hippocampus. Can activate the MAP kinases MAPK1/ERK2, MAPK8/JNK1 and MAPK14/p38 and stimulate transcription through the phosphorylation of ELK1 and ATF2. Can also phosphorylate in vitro CREBBP, PRM2, MEF2A and STMN1/OP18. Its function is as follows. Heat-stable, acidic, calmodulin-binding protein. This chain is Calcium/calmodulin-dependent protein kinase type IV (Camk4), found in Rattus norvegicus (Rat).